The following is a 142-amino-acid chain: Hemoglobin subunit alpha (142 aa).

The 141-residue stretch at 2-142 (VLSPADKTNV…VSTVLTSKYR (141 aa)) folds into the Globin domain. Ser4 is subject to Phosphoserine. The residue at position 8 (Lys8) is an N6-succinyllysine. Thr9 bears the Phosphothreonine mark. N6-succinyllysine is present on Lys12. Lys17 is modified (N6-acetyllysine; alternate). At Lys17 the chain carries N6-succinyllysine; alternate. The residue at position 25 (Tyr25) is a Phosphotyrosine. Position 36 is a phosphoserine (Ser36). Lys41 is subject to N6-succinyllysine. A Phosphoserine modification is found at Ser50. His59 contributes to the O2 binding site. Heme b is bound at residue His88. Ser103 carries the phosphoserine modification. Residue Thr109 is modified to Phosphothreonine. 2 positions are modified to phosphoserine: Ser125 and Ser132. 2 positions are modified to phosphothreonine: Thr135 and Thr138. Ser139 is subject to Phosphoserine.

Belongs to the globin family. Heterotetramer of two alpha chains and two beta chains. In terms of tissue distribution, red blood cells.

Its function is as follows. Involved in oxygen transport from the lung to the various peripheral tissues. Functionally, hemopressin acts as an antagonist peptide of the cannabinoid receptor CNR1. Hemopressin-binding efficiently blocks cannabinoid receptor CNR1 and subsequent signaling. In Piliocolobus badius (Western red colobus), this protein is Hemoglobin subunit alpha (HBA).